We begin with the raw amino-acid sequence, 304 residues long: uncharacterized protein (304 aa).

NAD(+) is bound by residues 136–137 (GI), 215–217 (VGR), and aspartate 241. The active site involves arginine 217. Glutamate 246 is an active-site residue. Residue histidine 265 is the Proton donor of the active site. NAD(+) is bound at residue 265-268 (HTAN).

This sequence belongs to the D-isomer specific 2-hydroxyacid dehydrogenase family.

This is an uncharacterized protein from Corynebacterium melassecola.